A 200-amino-acid chain; its full sequence is UPF0329 protein ECU06_1670 (200 aa).

Belongs to the UPF0329 family.

This Encephalitozoon cuniculi (strain GB-M1) (Microsporidian parasite) protein is UPF0329 protein ECU06_1670.